The following is a 959-amino-acid chain: Nucleoporin NUP100/NSP100 (959 aa).

Residues 1 to 104 are disordered; it reads MFGNNRPMFG…NSSNASNGNT (104 aa). FG repeat units follow at residues 2 to 3, 9 to 10, and G17; these read FG. Residues 12–36 are compositionally biased toward polar residues; it reads SNLSFGSNTSSFGGQQSQQPNSLFG. The SLFG 1; approximate repeat unit spans residues 21-24; it reads SSFG. The stretch at 33–36 is one SLFG 2 repeat; the sequence is SLFG. Positions 37 to 48 are enriched in low complexity; it reads NSNNNNNSTSNN. Residues 51–54 form an SLFG 3; approximate repeat; that stretch reads SGFG. 2 stretches are compositionally biased toward low complexity: residues 56–81 and 92–104; these read FTSAAGSNSNSLFGNNNTQNNGAFGQ and GSLNSSNASNGNT. The SLFG 4 repeat unit spans residues 66-69; that stretch reads SLFG. The GLFG 1; approximate repeat unit spans residues 77 to 80; sequence GAFG. An SLFG 5; approximate repeat occupies 89–92; that stretch reads SPFG. The FG 4 repeat unit spans residues 105–106; sequence FG. Residues 112–115 form a GLFG 2; approximate repeat; the sequence is GSFG. The span at 121-136 shows a compositional bias: low complexity; sequence AFNNNSNSTNSPFGFN. The interval 121–172 is disordered; the sequence is AFNNNSNSTNSPFGFNKPNTGGTLFGSQNNNSAGTSSLFGGQSTSTTGTFGN. The stretch at 131-134 is one SLFG 6; approximate repeat; sequence SPFG. Positions 137-153 are enriched in polar residues; that stretch reads KPNTGGTLFGSQNNNSA. One copy of the FG 5 repeat lies at 145 to 146; that stretch reads FG. Over residues 154–172 the composition is skewed to low complexity; that stretch reads GTSSLFGGQSTSTTGTFGN. The SLFG 7 repeat unit spans residues 157–160; it reads SLFG. A GLFG 3; approximate repeat occupies 168 to 171; sequence GTFG. Residues 175 to 178 form an SLFG 8; approximate repeat; the sequence is SSFG. The FG 6 repeat unit spans residues 189-190; that stretch reads FG. The interval 190–394 is disordered; sequence GAGNNSQSNT…NNQQQQSTGL (205 aa). Polar residues predominate over residues 192 to 245; sequence GNNSQSNTTGSLFGNQQSSAFGTNNQQGSLFGQQSQNTNNAFGNQNQLGGSSFG. The stretch at 202 to 205 is one SLFG 9 repeat; it reads SLFG. One copy of the SLFG 10; approximate repeat lies at 210-213; the sequence is SAFG. The stretch at 220–223 is one SLFG 11 repeat; the sequence is SLFG. The FG 7 repeat unit spans residues 233–234; that stretch reads FG. Residues 242 to 245 form an SLFG 12; approximate repeat; that stretch reads SSFG. The SLFG 13 repeat unit spans residues 253-256; sequence SLFG. Over residues 259-293 the composition is skewed to low complexity; the sequence is NNTLGNTTNNRNGLFGQMNSSNQGSSNSGLFGQNS. 2 GLFG repeats span residues 271 to 274 and 287 to 290; these read GLFG. Over residues 294-303 the composition is skewed to polar residues; it reads MNSSTQGVFG. One copy of the GLFG 6; approximate repeat lies at 300 to 303; it reads GVFG. Positions 304–317 are enriched in low complexity; sequence QNNNQMQINGNNNN. The SLFG 14 repeat unit spans residues 318–321; sequence SLFG. GLFG repeat units lie at residues 333-336, 345-348, 358-361, 379-382, and 393-396; these read GLFG. The segment covering 336-352 has biased composition (low complexity); that stretch reads GQNNQQQGSGLFGQNSQ. Residues 353-377 show a composition bias toward polar residues; that stretch reads TSGSSGLFGQNNQKQPNTFTQSNTG. 3 SLFG repeats span residues 405–408, 417–420, and 436–439; these read SLFG. Residues 448–449 form an FG 8 repeat; it reads FG. The SLFG 18 repeat unit spans residues 462 to 465; the sequence is SLFG. The SLFG 19; approximate repeat unit spans residues 474-477; that stretch reads SLFG. 3 GLFG repeats span residues 490–493, 506–509, and 523–526; these read GLFG. An FG 9 repeat occupies 542–543; that stretch reads FG. The stretch at 550 to 553 is one GLFG 15 repeat; sequence GLFG. The stretch at 569-570 is one FG 10 repeat; it reads FG. Disordered stretches follow at residues 672–697 and 745–794; these read TLERSDRGSSTSNSITDPESSYLNSN and DDQA…PMIE. Residues 679–697 show a composition bias toward polar residues; the sequence is GSSTSNSITDPESSYLNSN. A compositionally biased stretch (basic and acidic residues) spans 757–775; the sequence is LTEKAHSPQTDLKDDHDES. 2 positions are modified to phosphoserine: S763 and S783. Over residues 777–790 the composition is skewed to polar residues; that stretch reads PDPQSKSPNGSTSI. The 143-residue stretch at 814-956 folds into the Peptidase S59 domain; the sequence is KNNYYISPSI…GTYSYTIDHP (143 aa). The tract at residues 816-955 is nucleoporin RNA-binding motif (NRM); the sequence is NYYISPSIET…TGTYSYTIDH (140 aa).

The protein belongs to the nucleoporin GLFG family. In terms of assembly, component of the nuclear pore complex (NPC). NPC constitutes the exclusive means of nucleocytoplasmic transport. NPCs allow the passive diffusion of ions and small molecules and the active, nuclear transport receptor-mediated bidirectional transport of macromolecules such as proteins, RNAs, ribonucleoparticles (RNPs), and ribosomal subunits across the nuclear envelope. Due to its 8-fold rotational symmetry, all subunits are present with 8 copies or multiples thereof. Through its FG repeats NUP100 interacts with numerous karyopherins including KAP95, and MEX67.

The protein localises to the nucleus. It is found in the nuclear pore complex. The protein resides in the nucleus membrane. Functionally, functions as a component of the nuclear pore complex (NPC). NPC components, collectively referred to as nucleoporins (NUPs), can play the role of both NPC structural components and of docking or interaction partners for transiently associated nuclear transport factors. Active directional transport is assured by both, a Phe-Gly (FG) repeat affinity gradient for these transport factors across the NPC and a transport cofactor concentration gradient across the nuclear envelope (GSP1 and GSP2 GTPases associated predominantly with GTP in the nucleus, with GDP in the cytoplasm). NUP100 plays an important role in several nuclear export and import pathways including poly(A)+ RNA and protein transport. In Saccharomyces cerevisiae (strain ATCC 204508 / S288c) (Baker's yeast), this protein is Nucleoporin NUP100/NSP100 (NUP100).